A 203-amino-acid chain; its full sequence is Holliday junction branch migration complex subunit RuvA (203 aa).

Residues Met1 to Arg63 form a domain I region. The domain II stretch occupies residues Thr64–Lys142. Residues Glu143–Asn152 form a flexible linker region. Positions Asp153 to Arg203 are domain III.

This sequence belongs to the RuvA family. As to quaternary structure, homotetramer. Forms an RuvA(8)-RuvB(12)-Holliday junction (HJ) complex. HJ DNA is sandwiched between 2 RuvA tetramers; dsDNA enters through RuvA and exits via RuvB. An RuvB hexamer assembles on each DNA strand where it exits the tetramer. Each RuvB hexamer is contacted by two RuvA subunits (via domain III) on 2 adjacent RuvB subunits; this complex drives branch migration. In the full resolvosome a probable DNA-RuvA(4)-RuvB(12)-RuvC(2) complex forms which resolves the HJ.

The protein resides in the cytoplasm. Its function is as follows. The RuvA-RuvB-RuvC complex processes Holliday junction (HJ) DNA during genetic recombination and DNA repair, while the RuvA-RuvB complex plays an important role in the rescue of blocked DNA replication forks via replication fork reversal (RFR). RuvA specifically binds to HJ cruciform DNA, conferring on it an open structure. The RuvB hexamer acts as an ATP-dependent pump, pulling dsDNA into and through the RuvAB complex. HJ branch migration allows RuvC to scan DNA until it finds its consensus sequence, where it cleaves and resolves the cruciform DNA. This chain is Holliday junction branch migration complex subunit RuvA, found in Halalkalibacterium halodurans (strain ATCC BAA-125 / DSM 18197 / FERM 7344 / JCM 9153 / C-125) (Bacillus halodurans).